Reading from the N-terminus, the 180-residue chain is Acireductone dioxygenase (180 aa).

Residues His97, His99, Glu103, and His141 each contribute to the Fe(2+) site. Ni(2+) contacts are provided by His97, His99, Glu103, and His141.

This sequence belongs to the acireductone dioxygenase (ARD) family. Monomer. Fe(2+) serves as cofactor. The cofactor is Ni(2+).

The enzyme catalyses 1,2-dihydroxy-5-(methylsulfanyl)pent-1-en-3-one + O2 = 3-(methylsulfanyl)propanoate + CO + formate + 2 H(+). It carries out the reaction 1,2-dihydroxy-5-(methylsulfanyl)pent-1-en-3-one + O2 = 4-methylsulfanyl-2-oxobutanoate + formate + 2 H(+). Its pathway is amino-acid biosynthesis; L-methionine biosynthesis via salvage pathway; L-methionine from S-methyl-5-thio-alpha-D-ribose 1-phosphate: step 5/6. Catalyzes 2 different reactions between oxygen and the acireductone 1,2-dihydroxy-3-keto-5-methylthiopentene (DHK-MTPene) depending upon the metal bound in the active site. Fe-containing acireductone dioxygenase (Fe-ARD) produces formate and 2-keto-4-methylthiobutyrate (KMTB), the alpha-ketoacid precursor of methionine in the methionine recycle pathway. Ni-containing acireductone dioxygenase (Ni-ARD) produces methylthiopropionate, carbon monoxide and formate, and does not lie on the methionine recycle pathway. This is Acireductone dioxygenase from Yersinia pseudotuberculosis serotype O:1b (strain IP 31758).